The following is a 407-amino-acid chain: Cathepsin D (407 aa).

The N-terminal stretch at 1–20 is a signal peptide; sequence MQTPGVLLLILGLLDASSSA. The propeptide at 21 to 64 is activation peptide; it reads LIRIPLRKFTSIRRTMTEVGGSVEDLILKGPITKYSMQSSPRTK. The region spanning 79 to 402 is the Peptidase A1 domain; sequence YYGEIGIGTP…DREYNRVGFA (324 aa). Disulfide bonds link Cys91–Cys160 and Cys110–Cys117. Residue Asp97 is part of the active site. N-linked (GlcNAc...) asparagine glycans are attached at residues Asn134 and Asn258. Cys281 and Cys285 are joined by a disulfide. The active site involves Asp290. Cys324 and Cys361 are oxidised to a cystine.

Belongs to the peptidase A1 family. Occurs as a mixture of both a single chain form and two types of two chain (light and heavy) forms. Interacts with ADAM30; this leads to activation of CTSD. N- and O-glycosylated. In terms of processing, undergoes proteolytic cleavage and activation by ADAM30.

It is found in the lysosome. The protein resides in the melanosome. The protein localises to the secreted. It localises to the extracellular space. The enzyme catalyses Specificity similar to, but narrower than, that of pepsin A. Does not cleave the 4-Gln-|-His-5 bond in B chain of insulin.. Functionally, acid protease active in intracellular protein breakdown. Plays a role in APP processing following cleavage and activation by ADAM30 which leads to APP degradation. This chain is Cathepsin D (Ctsd), found in Rattus norvegicus (Rat).